We begin with the raw amino-acid sequence, 720 residues long: Protein-glutamine gamma-glutamyltransferase 5 (720 aa).

The residue at position 2 (Ala-2) is an N-acetylalanine. Active-site residues include Cys-278, His-337, and Asp-360. 4 residues coordinate Ca(2+): Asn-400, Asp-402, Glu-448, and Glu-453. A disordered region spans residues 470–499 (HGSQRGAELQPSRPTSLSQDSPRSLHTPSL). The segment covering 481 to 496 (SRPTSLSQDSPRSLHT) has biased composition (polar residues).

It belongs to the transglutaminase superfamily. Transglutaminase family. It depends on Ca(2+) as a cofactor. As to expression, expressed in foreskin keratinocytes.

The protein localises to the cytoplasm. It catalyses the reaction L-glutaminyl-[protein] + L-lysyl-[protein] = [protein]-L-lysyl-N(6)-5-L-glutamyl-[protein] + NH4(+). Its function is as follows. Catalyzes the cross-linking of proteins and the conjugation of polyamines to proteins. Contributes to the formation of the cornified cell envelope of keratinocytes. The protein is Protein-glutamine gamma-glutamyltransferase 5 (TGM5) of Homo sapiens (Human).